We begin with the raw amino-acid sequence, 366 residues long: tRNA/tmRNA (uracil-C(5))-methyltransferase (366 aa).

Q190, Y218, N223, E239, and D299 together coordinate S-adenosyl-L-methionine. C324 (nucleophile) is an active-site residue. E358 functions as the Proton acceptor in the catalytic mechanism.

This sequence belongs to the class I-like SAM-binding methyltransferase superfamily. RNA M5U methyltransferase family. TrmA subfamily.

It carries out the reaction uridine(54) in tRNA + S-adenosyl-L-methionine = 5-methyluridine(54) in tRNA + S-adenosyl-L-homocysteine + H(+). The catalysed reaction is uridine(341) in tmRNA + S-adenosyl-L-methionine = 5-methyluridine(341) in tmRNA + S-adenosyl-L-homocysteine + H(+). Its function is as follows. Dual-specificity methyltransferase that catalyzes the formation of 5-methyluridine at position 54 (m5U54) in all tRNAs, and that of position 341 (m5U341) in tmRNA (transfer-mRNA). The chain is tRNA/tmRNA (uracil-C(5))-methyltransferase from Escherichia coli O6:H1 (strain CFT073 / ATCC 700928 / UPEC).